The primary structure comprises 402 residues: S-adenosylmethionine synthase (402 aa).

Histidine 16 is a binding site for ATP. Aspartate 18 serves as a coordination point for Mg(2+). Glutamate 44 is a K(+) binding site. Positions 57 and 103 each coordinate L-methionine. The tract at residues 103 to 113 (QSPDIAQGVDT) is flexible loop. ATP is bound by residues 178–180 (DGK), 249–250 (KF), aspartate 258, 264–265 (RK), alanine 281, and lysine 285. Residue aspartate 258 coordinates L-methionine. Lysine 289 is an L-methionine binding site.

It belongs to the AdoMet synthase family. As to quaternary structure, homotetramer; dimer of dimers. Mg(2+) serves as cofactor. Requires K(+) as cofactor.

It is found in the cytoplasm. It catalyses the reaction L-methionine + ATP + H2O = S-adenosyl-L-methionine + phosphate + diphosphate. Its pathway is amino-acid biosynthesis; S-adenosyl-L-methionine biosynthesis; S-adenosyl-L-methionine from L-methionine: step 1/1. In terms of biological role, catalyzes the formation of S-adenosylmethionine (AdoMet) from methionine and ATP. The overall synthetic reaction is composed of two sequential steps, AdoMet formation and the subsequent tripolyphosphate hydrolysis which occurs prior to release of AdoMet from the enzyme. This is S-adenosylmethionine synthase from Mycobacterium sp. (strain JLS).